The primary structure comprises 400 residues: Cytoplasmic tRNA 2-thiolation protein 2 (400 aa).

The protein belongs to the CTU2/NCS2 family.

The protein localises to the cytoplasm. It functions in the pathway tRNA modification; 5-methoxycarbonylmethyl-2-thiouridine-tRNA biosynthesis. Plays a central role in 2-thiolation of mcm(5)S(2)U at tRNA wobble positions of tRNA(Lys), tRNA(Glu) and tRNA(Gln). May act by forming a heterodimer with NCS6/CTU1 that ligates sulfur from thiocarboxylated URM1 onto the uridine of tRNAs at wobble position. In Drosophila virilis (Fruit fly), this protein is Cytoplasmic tRNA 2-thiolation protein 2.